The chain runs to 837 residues: Protein translocase subunit SecA (837 aa).

Residues Gln-83, 101-105 (GEGKT), and Asp-494 each bind ATP.

Belongs to the SecA family. Monomer and homodimer. Part of the essential Sec protein translocation apparatus which comprises SecA, SecYEG and auxiliary proteins SecDF. Other proteins may also be involved.

It localises to the cell membrane. The protein localises to the cytoplasm. The enzyme catalyses ATP + H2O + cellular proteinSide 1 = ADP + phosphate + cellular proteinSide 2.. Part of the Sec protein translocase complex. Interacts with the SecYEG preprotein conducting channel. Has a central role in coupling the hydrolysis of ATP to the transfer of proteins into and across the cell membrane, serving as an ATP-driven molecular motor driving the stepwise translocation of polypeptide chains across the membrane. The sequence is that of Protein translocase subunit SecA from Ureaplasma parvum serovar 3 (strain ATCC 27815 / 27 / NCTC 11736).